Here is a 476-residue protein sequence, read N- to C-terminus: Salicylate biosynthesis isochorismate synthase (476 aa).

Positions 181–202 (RRRPSGPTAGAQGDASAQERRQ) are disordered.

The protein belongs to the isochorismate synthase family.

It carries out the reaction chorismate = isochorismate. Its pathway is siderophore biosynthesis; salicylate biosynthesis. In terms of biological role, involved in the conversion of chorismate to salicylate. The protein is Salicylate biosynthesis isochorismate synthase (pchA) of Pseudomonas aeruginosa (strain ATCC 15692 / DSM 22644 / CIP 104116 / JCM 14847 / LMG 12228 / 1C / PRS 101 / PAO1).